Consider the following 1018-residue polypeptide: Contactin-1 (1018 aa).

Residues 1 to 20 (MKMWLLFSLLVIISFKTCLS) form the signal peptide. 6 consecutive Ig-like C2-type domains span residues 41–131 (PIFE…ATLS), 137–223 (PFPP…KSVF), 241–326 (PADI…ARIY), 331–407 (PEWV…AELK), 413–500 (PTFE…GTLV), and 504–601 (PTRI…LVVR). 2 disulfides stabilise this stretch: cysteine 65–cysteine 114 and cysteine 158–cysteine 211. 2 N-linked (GlcNAc...) asparagine glycosylation sites follow: asparagine 208 and asparagine 258. Cysteine 263 and cysteine 310 form a disulfide bridge. N-linked (GlcNAc...) asparagine glycosylation occurs at asparagine 338. 2 cysteine pairs are disulfide-bonded: cysteine 352–cysteine 391 and cysteine 436–cysteine 484. Asparagine 457, asparagine 473, asparagine 494, and asparagine 521 each carry an N-linked (GlcNAc...) asparagine glycan. A disulfide bridge connects residues cysteine 526 and cysteine 583. Asparagine 591 is a glycosylation site (N-linked (GlcNAc...) asparagine). Fibronectin type-III domains follow at residues 606–704 (PPGG…TDGA), 709–806 (APSD…SAQD), 811–906 (APTA…APPS), and 907–1000 (QPPR…ILSP). 2 disordered regions span residues 698–718 (KIKTDGAAPNVAPSDVGGGGG) and 891–910 (PPSDMTETFTKKAPPSQPPR). Residue serine 999 is the site of GPI-anchor amidated serine attachment. A propeptide spans 1000 to 1018 (PCLLGFLLPALGILVYLEF) (removed in mature form).

It belongs to the immunoglobulin superfamily. Contactin family. In terms of assembly, monomer. Interacts with CNTNAP1 in cis form. Binds to the carbonic-anhydrase like domain of PTPRZ1. Interacts with NOTCH1 and TNR. Detected in a complex with NRCAM and PTPRB. Interacts with TASOR.

It is found in the cell membrane. In terms of biological role, contactins mediate cell surface interactions during nervous system development. Involved in the formation of paranodal axo-glial junctions in myelinated peripheral nerves and in the signaling between axons and myelinating glial cells via its association with CNTNAP1. Participates in oligodendrocytes generation by acting as a ligand of NOTCH1. Its association with NOTCH1 promotes NOTCH1 activation through the released notch intracellular domain (NICD) and subsequent translocation to the nucleus. Interaction with TNR induces a repulsion of neurons and an inhibition of neurite outgrowth. The sequence is that of Contactin-1 (CNTN1) from Bos taurus (Bovine).